The sequence spans 142 residues: MKTFVAKPETVKRDWYVVDAEGKTLGRLASEIASRLRGKHKAEYTPHVDTGDYIIVVNAEKVTVTGNKAKNKMYHRHSEFPGGLKSFSFEKLIERKPEMVLELAVKGMLPKGPLGRAMYRKLKVYAGAEHNHAAQQPKVLDI.

It belongs to the universal ribosomal protein uL13 family. As to quaternary structure, part of the 50S ribosomal subunit.

In terms of biological role, this protein is one of the early assembly proteins of the 50S ribosomal subunit, although it is not seen to bind rRNA by itself. It is important during the early stages of 50S assembly. This chain is Large ribosomal subunit protein uL13, found in Vibrio cholerae serotype O1 (strain M66-2).